A 136-amino-acid chain; its full sequence is uncharacterized protein (136 aa).

4 helical membrane passes run 10–32 (SAGI…FIWI), 44–66 (LRCG…ILHF), 70–89 (VLLL…KTLL), and 102–124 (IAGV…WLLF).

It is found in the cell membrane. This is an uncharacterized protein from Archaeoglobus fulgidus (strain ATCC 49558 / DSM 4304 / JCM 9628 / NBRC 100126 / VC-16).